The sequence spans 245 residues: 2,3-bisphosphoglycerate-dependent phosphoglycerate mutase (245 aa).

Substrate is bound by residues 8-15 (RHGQSLWN), 21-22 (TG), R60, 87-90 (ERHY), K98, 114-115 (RR), and 183-184 (GN). H9 serves as the catalytic Tele-phosphohistidine intermediate. The Proton donor/acceptor role is filled by E87.

Belongs to the phosphoglycerate mutase family. BPG-dependent PGAM subfamily.

The enzyme catalyses (2R)-2-phosphoglycerate = (2R)-3-phosphoglycerate. Its pathway is carbohydrate degradation; glycolysis; pyruvate from D-glyceraldehyde 3-phosphate: step 3/5. Functionally, catalyzes the interconversion of 2-phosphoglycerate and 3-phosphoglycerate. The polypeptide is 2,3-bisphosphoglycerate-dependent phosphoglycerate mutase (Bacillus anthracis (strain A0248)).